A 204-amino-acid chain; its full sequence is Protein PAXX (204 aa).

The PISA domain occupies phenylalanine 37–alanine 79. A Phosphoserine modification is found at serine 134. The segment at glutamate 143–threonine 204 is disordered. Threonine 145 bears the Phosphothreonine mark. Phosphoserine occurs at positions 148 and 152. Positions glycine 171 to threonine 204 are mediates interaction with XRCC5/Ku80 and XRCC6/Ku70 and association with the non-homologous end joining core complex. The short motif at phenylalanine 190 to threonine 204 is the XLM element.

Belongs to the XRCC4-XLF family. PAXX subfamily. In terms of assembly, homodimer. Interacts with the DNA-bound XRCC5/Ku80 and XRCC6/Ku70 heterodimer (Ku complex); the interaction is direct. Associated component of the non-homologous end joining (NHEJ) complex, composed of the core proteins PRKDC, LIG4, XRCC4, XRCC6/Ku70, XRCC5/Ku86 and NHEJ1/XLF. Interacts with POLL (DNA polymerase lambda); promoting POLL recruitment to double-strand breaks (DSBs) and stimulation of the end-filling activity of POLL. In terms of processing, phosphorylation may inhibit interaction with the DNA-bound XRCC5/Ku80 and XRCC6/Ku70 heterodimer (Ku complex).

The protein localises to the nucleus. Its subcellular location is the chromosome. The protein resides in the cytoplasm. Its function is as follows. Non-essential DNA repair protein involved in DNA non-homologous end joining (NHEJ); participates in double-strand break (DSB) repair and V(D)J recombination. May act as a scaffold required for accumulation of the Ku heterodimer, composed of XRCC5/Ku80 and XRCC6/Ku70, at double-strand break sites and promote the assembly and/or stability of the NHEJ machinery. Involved in NHEJ by promoting the ligation of blunt-ended DNA ends. Together with NHEJ1/XLF, collaborates with DNA polymerase lambda (POLL) to promote joining of non-cohesive DNA ends. Constitutes a non-essential component of classical NHEJ: has a complementary but distinct function with NHEJ1/XLF in DNA repair. Able to restrict infection by herpesvirus 1 (HSV-1) via an unknown mechanism. This is Protein PAXX from Homo sapiens (Human).